We begin with the raw amino-acid sequence, 78 residues long: Defensin-like protein 173 (78 aa).

An N-terminal signal peptide occupies residues 1–23; it reads MAKAPSPLVFPIIFLIIFALVEP. 4 disulfides stabilise this stretch: Cys-27-Cys-71, Cys-34-Cys-56, Cys-40-Cys-65, and Cys-44-Cys-67.

This sequence belongs to the DEFL family.

The protein resides in the secreted. This chain is Defensin-like protein 173 (LCR63), found in Arabidopsis thaliana (Mouse-ear cress).